Reading from the N-terminus, the 1038-residue chain is Probable ubiquitin conjugation factor E4 (1038 aa).

Disordered regions lie at residues 430–459 (ANDA…ASGQ) and 1010–1038 (SHQS…MLID). Positions 446-459 (SKEATSSSSNASGQ) are enriched in low complexity. One can recognise a U-box domain in the interval 940–1014 (EIPDEFLDPI…DEFVKSHQSK (75 aa)). Over residues 1017–1028 (TSGEDSSNKERI) the composition is skewed to basic and acidic residues. The span at 1029–1038 (QTTNSDMLID) shows a compositional bias: polar residues.

This sequence belongs to the ubiquitin conjugation factor E4 family.

The protein localises to the cytoplasm. It is found in the nucleus. It catalyses the reaction S-ubiquitinyl-[E2 ubiquitin-conjugating enzyme]-L-cysteine + [acceptor protein]-L-lysine = [E2 ubiquitin-conjugating enzyme]-L-cysteine + N(6)-ubiquitinyl-[acceptor protein]-L-lysine.. Its pathway is protein modification; protein ubiquitination. Its function is as follows. Ubiquitin-protein ligase that may function as an E3 ligase in conjunction with specific E1 and E2 ligases. May also function as an E4 ligase mediating the assembly of polyubiquitin chain assembly on substrates monoubiquitinated by another E3 ubiquitin ligase. This chain is Probable ubiquitin conjugation factor E4 (PUB1), found in Arabidopsis thaliana (Mouse-ear cress).